An 817-amino-acid polypeptide reads, in one-letter code: Protein Jade-3 (817 aa).

The interval 1–38 (MKRLRNLSSSDSSDNESPSTSFSSCFQHKGKGKCTADD) is disordered. Residues 8–24 (SSSDSSDNESPSTSFSS) are compositionally biased toward low complexity. The PHD-type 1 zinc-finger motif lies at 202 to 252 (DVICDVCRSPDSEEGNDMVFCDRCNICVHQACYGILKVPEGSWLCRTCVLG). Residues 254–288 (HPQCILCPKTGGAMKATRTGTKWAHVSCALWIPEV) form a C2HC pre-PHD-type zinc finger. A PHD-type 2 zinc finger spans residues 312 to 368 (LVCSLCKLKTGACIQCSVKSCITAFHVTCAFEHSLEMKTILDEGDEVKFKSYCLKHS). Disordered regions lie at residues 375 to 396 (ISEQ…SERT), 665 to 689 (NGVL…QNSE), and 719 to 817 (LVRT…SVQR). Over residues 379 to 396 (EEPHKTHSDNRPTESERT) the composition is skewed to basic and acidic residues. Over residues 667 to 689 (VLSSGDRTQRDSSSQTSPGQNSE) the composition is skewed to polar residues. Residues 722–743 (TTEDLRSSEKPQRRQSVKERLW) are compositionally biased toward basic and acidic residues. The span at 747 to 758 (PADTQTSGTPYQ) shows a compositional bias: polar residues. Positions 777–799 (DENKDHMLLRRNSRESPNRDSCR) are enriched in basic and acidic residues. The segment covering 801–810 (SRIRGKRKMT) has biased composition (basic residues).

Belongs to the JADE family. Component of the HBO1 complex.

Scaffold subunit of some HBO1 complexes, which have a histone H4 acetyltransferase activity. The sequence is that of Protein Jade-3 (jade3) from Xenopus tropicalis (Western clawed frog).